Reading from the N-terminus, the 358-residue chain is 3'(2'),5'-bisphosphate nucleotidase (358 aa).

Residue D52 is the Proton acceptor of the active site. Positions 78, 140, 142, and 143 each coordinate Mg(2+). The active-site Proton acceptor is T145. Residues T145, H239, S263, K266, R280, and D292 each coordinate adenosine 3',5'-bisphosphate. Positions 239, 263, 266, 280, and 292 each coordinate AMP. D292 serves as a coordination point for Mg(2+).

This sequence belongs to the inositol monophosphatase superfamily. Requires Mg(2+) as cofactor. Is constitutively transcribed in both roots and shoots.

It carries out the reaction 3'-phosphoadenylyl sulfate + H2O = adenosine 5'-phosphosulfate + phosphate. The catalysed reaction is adenosine 3',5'-bisphosphate + H2O = AMP + phosphate. The enzyme catalyses adenosine 2',5'-bisphosphate + H2O = AMP + phosphate. Inhibited by Ca(2+), Li(+), and Na(+) and activated by K(+). Functionally, phosphatase that converts adenosine 3'-phosphate 5'-phosphosulfate (PAPS) to adenosine 5'-phosphosulfate (APS) and 3'(2')-phosphoadenosine 5'-phosphate (PAP) to AMP. May regulate the flux of sulfur in the sulfur-activation pathway by converting PAPS to APS. Shows no activity on myo-inositol 1-phosphate, beta-glycerol phosphate, NADPH, NADP and 5'-AMP. The sequence is that of 3'(2'),5'-bisphosphate nucleotidase from Oryza sativa (Rice).